The primary structure comprises 124 residues: Quinol oxidase subunit 4 (124 aa).

Transmembrane regions (helical) follow at residues 16–36 (IVGF…AVYT), 44–64 (LWII…MFMH), and 78–98 (TLFG…IFAA).

This sequence belongs to the cytochrome c oxidase bacterial subunit 4 family.

The protein resides in the cell membrane. It carries out the reaction 2 a quinol + O2 = 2 a quinone + 2 H2O. Functionally, catalyzes quinol oxidation with the concomitant reduction of oxygen to water. Major component for energy conversion during vegetative growth. The polypeptide is Quinol oxidase subunit 4 (qoxD) (Bacillus subtilis (strain 168)).